The chain runs to 260 residues: UPF0246 protein BamMC406_2140 (260 aa).

Belongs to the UPF0246 family.

The chain is UPF0246 protein BamMC406_2140 from Burkholderia ambifaria (strain MC40-6).